The primary structure comprises 322 residues: MSPENQSSVSEFLLLGLPIRPEQQAVFFALFLGMYLTTVLGNLLIMLLIQLDSHLHTPMYFFLSHLALTDISFSSVTVPKMLMNMQTQHLAVFYKGCISQTYFFIFFADLDSFLITSMAYDRYVAICHPLHYATIMTQSQCVMLVAGSWVIACACALLHTLLLAQLSFCADHIIPHYFCDLGALLKLSCSDTSLNQLAIFTAALTAIMLPFLCILVSYGHIGVTILQIPSTKGICKALSTCGSHLSVVTIYYRTIIGLYFLPPSSNTNDKNIIASVIYTAVTPMLNPFIYSLRNKDIKGALRKLLSRSGAVAHACNLNTLGG.

The Extracellular segment spans residues 1-25 (MSPENQSSVSEFLLLGLPIRPEQQA). Residue Asn5 is glycosylated (N-linked (GlcNAc...) asparagine). The chain crosses the membrane as a helical span at residues 26-49 (VFFALFLGMYLTTVLGNLLIMLLI). The Cytoplasmic portion of the chain corresponds to 50 to 57 (QLDSHLHT). The chain crosses the membrane as a helical span at residues 58–79 (PMYFFLSHLALTDISFSSVTVP). The Extracellular portion of the chain corresponds to 80–100 (KMLMNMQTQHLAVFYKGCISQ). Cys97 and Cys189 are disulfide-bonded. Residues 101–120 (TYFFIFFADLDSFLITSMAY) form a helical membrane-spanning segment. The Cytoplasmic portion of the chain corresponds to 121 to 139 (DRYVAICHPLHYATIMTQS). The helical transmembrane segment at 140 to 158 (QCVMLVAGSWVIACACALL) threads the bilayer. Residues 159 to 196 (HTLLLAQLSFCADHIIPHYFCDLGALLKLSCSDTSLNQ) lie on the Extracellular side of the membrane. Residues 197–219 (LAIFTAALTAIMLPFLCILVSYG) traverse the membrane as a helical segment. The Cytoplasmic segment spans residues 220–236 (HIGVTILQIPSTKGICK). A helical membrane pass occupies residues 237-259 (ALSTCGSHLSVVTIYYRTIIGLY). Residues 260–272 (FLPPSSNTNDKNI) are Extracellular-facing. A helical transmembrane segment spans residues 273–292 (IASVIYTAVTPMLNPFIYSL). The Cytoplasmic portion of the chain corresponds to 293 to 322 (RNKDIKGALRKLLSRSGAVAHACNLNTLGG).

It belongs to the G-protein coupled receptor 1 family.

It is found in the cell membrane. Its function is as follows. Odorant receptor. The sequence is that of Olfactory receptor 1J1 from Homo sapiens (Human).